Reading from the N-terminus, the 88-residue chain is MAYERRSRPSGPRKKFFHRRKYCKFCSDSTIKIDYKRPDILHDYITERGKIMPRRITGSCSKHQRELTQAIKRARSIALLPFVVTEGR.

The protein belongs to the bacterial ribosomal protein bS18 family. Part of the 30S ribosomal subunit. Forms a tight heterodimer with protein bS6.

Binds as a heterodimer with protein bS6 to the central domain of the 16S rRNA, where it helps stabilize the platform of the 30S subunit. The protein is Small ribosomal subunit protein bS18 of Syntrophus aciditrophicus (strain SB).